The sequence spans 238 residues: 3-dehydroquinate dehydratase (238 aa).

3-dehydroquinate is bound by residues 35–37 (ELR) and R70. The active-site Proton donor/acceptor is H133. Catalysis depends on K160, which acts as the Schiff-base intermediate with substrate. Residues R202 and Q225 each contribute to the 3-dehydroquinate site.

The protein belongs to the type-I 3-dehydroquinase family. As to quaternary structure, homodimer.

It carries out the reaction 3-dehydroquinate = 3-dehydroshikimate + H2O. The protein operates within metabolic intermediate biosynthesis; chorismate biosynthesis; chorismate from D-erythrose 4-phosphate and phosphoenolpyruvate: step 3/7. In terms of biological role, involved in the third step of the chorismate pathway, which leads to the biosynthesis of aromatic amino acids. Catalyzes the cis-dehydration of 3-dehydroquinate (DHQ) and introduces the first double bond of the aromatic ring to yield 3-dehydroshikimate. The sequence is that of 3-dehydroquinate dehydratase from Staphylococcus aureus (strain MSSA476).